A 320-amino-acid chain; its full sequence is Transaldolase (320 aa).

The Schiff-base intermediate with substrate role is filled by lysine 126.

Belongs to the transaldolase family. Type 1 subfamily. In terms of assembly, homodimer.

The protein resides in the cytoplasm. The catalysed reaction is D-sedoheptulose 7-phosphate + D-glyceraldehyde 3-phosphate = D-erythrose 4-phosphate + beta-D-fructose 6-phosphate. The protein operates within carbohydrate degradation; pentose phosphate pathway; D-glyceraldehyde 3-phosphate and beta-D-fructose 6-phosphate from D-ribose 5-phosphate and D-xylulose 5-phosphate (non-oxidative stage): step 2/3. Its function is as follows. Transaldolase is important for the balance of metabolites in the pentose-phosphate pathway. This is Transaldolase from Bordetella pertussis (strain Tohama I / ATCC BAA-589 / NCTC 13251).